The sequence spans 81 residues: ATP synthase subunit c, chloroplastic (81 aa).

2 consecutive transmembrane segments (helical) span residues 3-23 and 57-77; these read PIIS…ASIG and LAFM…LLFA.

The protein belongs to the ATPase C chain family. As to quaternary structure, F-type ATPases have 2 components, F(1) - the catalytic core - and F(0) - the membrane proton channel. F(1) has five subunits: alpha(3), beta(3), gamma(1), delta(1), epsilon(1). F(0) has four main subunits: a(1), b(1), b'(1) and c(10-14). The alpha and beta chains form an alternating ring which encloses part of the gamma chain. F(1) is attached to F(0) by a central stalk formed by the gamma and epsilon chains, while a peripheral stalk is formed by the delta, b and b' chains.

The protein localises to the plastid. Its subcellular location is the chloroplast thylakoid membrane. In terms of biological role, f(1)F(0) ATP synthase produces ATP from ADP in the presence of a proton or sodium gradient. F-type ATPases consist of two structural domains, F(1) containing the extramembraneous catalytic core and F(0) containing the membrane proton channel, linked together by a central stalk and a peripheral stalk. During catalysis, ATP synthesis in the catalytic domain of F(1) is coupled via a rotary mechanism of the central stalk subunits to proton translocation. Functionally, key component of the F(0) channel; it plays a direct role in translocation across the membrane. A homomeric c-ring of between 10-14 subunits forms the central stalk rotor element with the F(1) delta and epsilon subunits. The sequence is that of ATP synthase subunit c, chloroplastic from Cicer arietinum (Chickpea).